A 281-amino-acid chain; its full sequence is NADH--cytochrome b5 reductase 1 (281 aa).

A helical transmembrane segment spans residues 13 to 33 (ILLGVFVAFVAVGAGAAYFLT). The AKR2A-binding sequence (ABS) required for mitochondrion outer membrane targeting signature appears at 34-40 (SSKKRRV). The FAD-binding FR-type domain maps to 45–149 (ENFKEFKLVK…KGPKGRFKYQ (105 aa)). Residues 129–144 (REMR…GPKG) and 155–187 (AFGM…KVHL) each bind FAD. A Phosphothreonine modification is found at threonine 166.

This sequence belongs to the flavoprotein pyridine nucleotide cytochrome reductase family. As to quaternary structure, monomer. Interacts with AKR2A. Requires FAD as cofactor. Expressed in roots, stems, flowers and siliques. Detected in leaves.

Its subcellular location is the mitochondrion outer membrane. It carries out the reaction 2 Fe(III)-[cytochrome b5] + NADH = 2 Fe(II)-[cytochrome b5] + NAD(+) + H(+). In terms of biological role, reductase transferring electrons from NADH to cytochrome b5. Required for the NADH-dependent electron transfer involved in the desaturation and hydroxylation of fatty acids and in the desaturation of sterol precursors. No activity with NADPH as electron donor. This Arabidopsis thaliana (Mouse-ear cress) protein is NADH--cytochrome b5 reductase 1.